The primary structure comprises 495 residues: Ectonucleoside triphosphate diphosphohydrolase 8 (495 aa).

Residues 1–8 lie on the Cytoplasmic side of the membrane; the sequence is MGLTWKQR. A helical membrane pass occupies residues 9–29; sequence VFTALLGAAAVSGLTALLLVL. Over 30 to 466 the chain is Extracellular; that stretch reads VGTMNVLLPP…PAQGWAQSFG (437 aa). Residues Cys78 and Cys102 are joined by a disulfide bond. Glu168 serves as the catalytic Proton acceptor. Residues Cys246 and Cys292 are joined by a disulfide bond. Residues Asn303 and Asn324 are each glycosylated (N-linked (GlcNAc...) asparagine). 2 cysteine pairs are disulfide-bonded: Cys328–Cys334 and Cys380–Cys403. A helical membrane pass occupies residues 467–487; the sequence is VWAAGVVFVVLTLAATLGAVA. Residues 488–495 lie on the Cytoplasmic side of the membrane; sequence VQVFWLQD.

It belongs to the GDA1/CD39 NTPase family. Ca(2+) serves as cofactor. Requires Mg(2+) as cofactor. N-glycosylated.

The protein localises to the cell membrane. It carries out the reaction a ribonucleoside 5'-triphosphate + 2 H2O = a ribonucleoside 5'-phosphate + 2 phosphate + 2 H(+). Its function is as follows. Canalicular ectonucleoside NTPDase responsible for the main hepatic NTPDase activity. Ectonucleoside NTPDases catalyze the hydrolysis of gamma- and beta-phosphate residues of nucleotides, playing a central role in concentration of extracellular nucleotides. Has activity toward ATP, ADP, UTP and UDP, but not toward AMP. This chain is Ectonucleoside triphosphate diphosphohydrolase 8 (ENTPD8), found in Bos taurus (Bovine).